The following is a 129-amino-acid chain: Ig lambda-1 chain V region S43 (129 aa).

Positions 1–19 (MAWISLILSLLALSSGAIS) are cleaved as a signal peptide. Position 20 is a pyrrolidone carboxylic acid (Q20). The Ig-like domain occupies 20–125 (QAVVTQESAL…HWVFGGGTKL (106 aa)).

The protein is Ig lambda-1 chain V region S43 of Mus musculus (Mouse).